A 209-amino-acid chain; its full sequence is Large ribosomal subunit protein uL3 (209 aa).

N5-methylglutamine is present on Gln-150.

It belongs to the universal ribosomal protein uL3 family. Part of the 50S ribosomal subunit. Forms a cluster with proteins L14 and L19. Methylated by PrmB.

Functionally, one of the primary rRNA binding proteins, it binds directly near the 3'-end of the 23S rRNA, where it nucleates assembly of the 50S subunit. The sequence is that of Large ribosomal subunit protein uL3 from Vibrio parahaemolyticus serotype O3:K6 (strain RIMD 2210633).